The chain runs to 126 residues: Small ribosomal subunit protein uS11 (126 aa).

This sequence belongs to the universal ribosomal protein uS11 family. In terms of assembly, part of the 30S ribosomal subunit.

Located on the platform of the 30S subunit. The polypeptide is Small ribosomal subunit protein uS11 (Methanosarcina barkeri (strain Fusaro / DSM 804)).